Here is a 399-residue protein sequence, read N- to C-terminus: Nitric oxide reductase (399 aa).

The tract at residues histidine 32 to isoleucine 221 is zinc metallo-hydrolase. Fe cation is bound by residues histidine 81, glutamate 83, aspartate 85, histidine 148, aspartate 167, and histidine 228. One can recognise a Flavodoxin-like domain in the interval alanine 255–alanine 394.

It in the N-terminal section; belongs to the zinc metallo-hydrolase group 3 family. Homodimer. FMN serves as cofactor. Requires Fe cation as cofactor.

Its function is as follows. Has nitric oxide reductase activity in combination with Hrb; probably involved in nitrosative stress protection. The protein is Nitric oxide reductase (fprA) of Moorella thermoacetica (strain ATCC 39073 / JCM 9320).